Here is a 103-residue protein sequence, read N- to C-terminus: Large ribosomal subunit protein uL24 (103 aa).

The protein belongs to the universal ribosomal protein uL24 family. As to quaternary structure, part of the 50S ribosomal subunit.

Functionally, one of two assembly initiator proteins, it binds directly to the 5'-end of the 23S rRNA, where it nucleates assembly of the 50S subunit. Its function is as follows. One of the proteins that surrounds the polypeptide exit tunnel on the outside of the subunit. This is Large ribosomal subunit protein uL24 from Pediococcus pentosaceus (strain ATCC 25745 / CCUG 21536 / LMG 10740 / 183-1w).